A 571-amino-acid chain; its full sequence is Oxysterol-binding protein 11 (571 aa).

A disordered region spans residues 1 to 73; sequence MSNFFKKLVK…IGEQIDTLDD (73 aa). Polar residues predominate over residues 33-42; sequence NGNQVVPDTA. Positions 43–54 are enriched in low complexity; it reads SSYSDDSNSLSD. Positions 387–420 form a coiled coil; the sequence is YLEREENKLANKEKNKIEEREREKRKTRESRKEI.

It belongs to the OSBP family.

The sequence is that of Oxysterol-binding protein 11 (osbK) from Dictyostelium discoideum (Social amoeba).